The primary structure comprises 115 residues: NADH-ubiquinone oxidoreductase chain 3 (115 aa).

3 helical membrane passes run 3 to 23 (LFIM…LNLL), 55 to 75 (FFMV…LLPL), and 87 to 107 (TITW…YEWL).

It belongs to the complex I subunit 3 family.

Its subcellular location is the mitochondrion membrane. The catalysed reaction is a ubiquinone + NADH + 5 H(+)(in) = a ubiquinol + NAD(+) + 4 H(+)(out). Core subunit of the mitochondrial membrane respiratory chain NADH dehydrogenase (Complex I) that is believed to belong to the minimal assembly required for catalysis. Complex I functions in the transfer of electrons from NADH to the respiratory chain. The immediate electron acceptor for the enzyme is believed to be ubiquinone. This chain is NADH-ubiquinone oxidoreductase chain 3 (MT-ND3), found in Alligator mississippiensis (American alligator).